A 72-amino-acid chain; its full sequence is Brevinin-2SN4 (72 aa).

Residues 1–22 form the signal peptide; the sequence is MFTMKKPMLLLFFLGMISMSLC. Positions 23–40 are cleaved as a propeptide — removed in mature form; that stretch reads QDERGADEDDGGEMTEEE. Cys66 and Cys72 form a disulfide bridge.

Belongs to the frog skin active peptide (FSAP) family. Brevinin subfamily. As to expression, expressed by the skin glands.

It localises to the secreted. Antimicrobial peptide. Active against a variety of Gram-negative and Gram-positive bacterial strains. Not active against fungi. Shows very weak hemolytic activity against human erythrocytes. The protein is Brevinin-2SN4 of Sylvirana spinulosa (Fine-spined frog).